Reading from the N-terminus, the 622-residue chain is FERM domain-containing protein 6 (622 aa).

The region spanning 16-328 is the FERM domain; sequence RSVCIFLPND…NSHRLYMNLQ (313 aa). A disordered region spans residues 364-445; sequence KRSRASGSSA…SGVESGGKDR (82 aa). 2 stretches are compositionally biased toward low complexity: residues 384 to 395 and 425 to 438; these read HSTASHSSSHTS and SSMTSHGSSHTSGV. Residue S522 is modified to Phosphoserine. T523 carries the post-translational modification Phosphothreonine. Phosphoserine occurs at positions 525, 542, and 544.

The protein localises to the cytoplasm. It is found in the cell membrane. The chain is FERM domain-containing protein 6 (FRMD6) from Homo sapiens (Human).